A 220-amino-acid chain; its full sequence is Aspartic protease inhibitor 4 (220 aa).

The N-terminal stretch at 1–23 (MMKCLFLLCLCLLPILVFSSTFT) is a signal peptide. Positions 24–32 (SQNPINLPS) are excised as a propeptide. Residues 26-31 (NPINLP) carry the Vacuolar targeting signal motif. N51 is a glycosylation site (N-linked (GlcNAc...) asparagine). 2 disulfide bridges follow: C80–C125 and C174–C185.

It belongs to the protease inhibitor I3 (leguminous Kunitz-type inhibitor) family. As to expression, tubers.

The protein resides in the vacuole. Inhibits tightly cathepsin D (aspartic protease) and weakly trypsin (serine protease). May protect the plant by inhibiting proteases of invading organisms. The protein is Aspartic protease inhibitor 4 of Solanum tuberosum (Potato).